The chain runs to 142 residues: Large ribosomal subunit protein uL13 (142 aa).

This sequence belongs to the universal ribosomal protein uL13 family. As to quaternary structure, part of the 50S ribosomal subunit.

Its function is as follows. This protein is one of the early assembly proteins of the 50S ribosomal subunit, although it is not seen to bind rRNA by itself. It is important during the early stages of 50S assembly. This chain is Large ribosomal subunit protein uL13, found in Histophilus somni (Haemophilus somnus).